The chain runs to 689 residues: FACT complex subunit ssrp1-B (689 aa).

Disordered stretches follow at residues 434–565 (DNKS…KRAT) and 592–689 (KAGA…GESD). Residues 461–477 (EQDDDSDDESTDEDYDL) show a composition bias toward acidic residues. Composition is skewed to basic and acidic residues over residues 478–491 (DKDM…KDSS), 523–532 (IEPKKKESKE), 538–563 (EKKE…EPKR), and 601–628 (SADD…EYKK). Positions 561–627 (PKRATTAYII…RYEAEMKEYK (67 aa)) form a DNA-binding region, HMG box. Residues 638 to 650 (GPSTKKSSDQSPG) are compositionally biased toward polar residues.

The protein belongs to the SSRP1 family. As to quaternary structure, component of the FACT complex, a stable heterodimer of hmg-3 and spt-16. The FACT complex may also include hmg-4 instead of hmg-3. In terms of tissue distribution, expressed in the germline.

The protein resides in the nucleus. It localises to the chromosome. In terms of biological role, component of the FACT complex, a general chromatin factor that acts to reorganize nucleosomes. The FACT complex is involved in multiple processes that require DNA as a template such as mRNA elongation, DNA replication and DNA repair. During transcription elongation the FACT complex acts as a histone chaperone that both destabilizes and restores nucleosomal structure. It facilitates the passage of RNA polymerase II and transcription by promoting the dissociation of one histone H2A-H2B dimer from the nucleosome, then subsequently promotes the reestablishment of the nucleosome following the passage of RNA polymerase II. Binds specifically to double-stranded DNA. In embryos, may function redundantly with hmg-4 to promote cell cycle progression and development of the anterior pharynx. In the germline, acts non-redundantly with hmg-4 to play a role in oocyte development. The chain is FACT complex subunit ssrp1-B from Caenorhabditis elegans.